Here is a 219-residue protein sequence, read N- to C-terminus: MGRRPARCYRQIKNKPYPKSRFCRGVPDPKIRIYDVGMKRKGVDEFPFCVHLVSWEKENVSSEALEAARIACNKYMTKSAGKDAFHLRVRVHPFHVLRINKMLSCAGADRLQTGMRGAFGKPQGVCARVAIGQVLLSVRCKDGNSNHAQEALRRAKFKFPGRQKIIVSRKWGFTKFSRTDYLKYKSENRIVPDGVNAKLLGNHGPLAARQPGRAFLSSS.

Belongs to the universal ribosomal protein uL16 family. Component of the small ribosomal subunit. Mature ribosomes consist of a small (40S) and a large (60S) subunit. The 40S subunit contains about 33 different proteins and 1 molecule of RNA (18S). The 60S subunit contains about 49 different proteins and 3 molecules of RNA (25S, 5.8S and 5S).

The chain is Large ribosomal subunit protein uL16 (RPL10) from Solanum melongena (Eggplant).